We begin with the raw amino-acid sequence, 125 residues long: Large ribosomal subunit protein mL51 (125 aa).

The transit peptide at 1–29 (MWSVQQLLWGCRSLLTQGCRSFSLGSRDL) directs the protein to the mitochondrion.

Belongs to the mitochondrion-specific ribosomal protein mL51 family. Component of the mitochondrial ribosome large subunit (39S) which comprises a 16S rRNA and about 50 distinct proteins.

Its subcellular location is the mitochondrion. The chain is Large ribosomal subunit protein mL51 (mrpl51) from Xenopus tropicalis (Western clawed frog).